The primary structure comprises 204 residues: Thiamine-phosphate synthase (204 aa).

4-amino-2-methyl-5-(diphosphooxymethyl)pyrimidine is bound by residues 32-36 (QLRMK) and aspartate 64. Residues aspartate 65 and aspartate 84 each coordinate Mg(2+). Threonine 103 lines the 4-amino-2-methyl-5-(diphosphooxymethyl)pyrimidine pocket. 129–131 (TTT) contacts 2-[(2R,5Z)-2-carboxy-4-methylthiazol-5(2H)-ylidene]ethyl phosphate. Lysine 132 is a binding site for 4-amino-2-methyl-5-(diphosphooxymethyl)pyrimidine. Position 165 (glycine 165) interacts with 2-[(2R,5Z)-2-carboxy-4-methylthiazol-5(2H)-ylidene]ethyl phosphate.

It belongs to the thiamine-phosphate synthase family. It depends on Mg(2+) as a cofactor.

The catalysed reaction is 2-[(2R,5Z)-2-carboxy-4-methylthiazol-5(2H)-ylidene]ethyl phosphate + 4-amino-2-methyl-5-(diphosphooxymethyl)pyrimidine + 2 H(+) = thiamine phosphate + CO2 + diphosphate. The enzyme catalyses 2-(2-carboxy-4-methylthiazol-5-yl)ethyl phosphate + 4-amino-2-methyl-5-(diphosphooxymethyl)pyrimidine + 2 H(+) = thiamine phosphate + CO2 + diphosphate. It carries out the reaction 4-methyl-5-(2-phosphooxyethyl)-thiazole + 4-amino-2-methyl-5-(diphosphooxymethyl)pyrimidine + H(+) = thiamine phosphate + diphosphate. It functions in the pathway cofactor biosynthesis; thiamine diphosphate biosynthesis; thiamine phosphate from 4-amino-2-methyl-5-diphosphomethylpyrimidine and 4-methyl-5-(2-phosphoethyl)-thiazole: step 1/1. Its function is as follows. Condenses 4-methyl-5-(beta-hydroxyethyl)thiazole monophosphate (THZ-P) and 2-methyl-4-amino-5-hydroxymethyl pyrimidine pyrophosphate (HMP-PP) to form thiamine monophosphate (TMP). The polypeptide is Thiamine-phosphate synthase (Bacteroides fragilis (strain ATCC 25285 / DSM 2151 / CCUG 4856 / JCM 11019 / LMG 10263 / NCTC 9343 / Onslow / VPI 2553 / EN-2)).